We begin with the raw amino-acid sequence, 637 residues long: Sterol 3-beta-glucosyltransferase UGT80A2 (637 aa).

Disordered regions lie at residues 1-29 (MPEI…RASV) and 66-112 (VAES…TERQ). The span at 13–24 (SSSSSSSSSSSS) shows a compositional bias: low complexity. The span at 67 to 79 (AESSGTGNKSFSR) shows a compositional bias: polar residues. A compositionally biased stretch (basic and acidic residues) spans 103–112 (RLDKSKTERQ).

The protein belongs to the glycosyltransferase 28 family. Expressed in roots, cauline leaf epidermal cells, stomata, stamen, pollen and around the base of siliques.

It carries out the reaction a sterol + UDP-alpha-D-glucose = a sterol 3-beta-D-glucoside + UDP + H(+). Its function is as follows. Involved in the biosynthesis of sterol glucosides. Catalyzes the synthesis of steryl glycosides (SGs) and acyl steryl glycosides (ASGs) which are the most abundant sterol derivatives in higher plants. Can act on several sterols like sitosterol, campesterol and stigmasterol. Both UGT80A2 and UGT80B1 are required for the normal production of SGs and ASGs in seeds. The chain is Sterol 3-beta-glucosyltransferase UGT80A2 (UGT80A2) from Arabidopsis thaliana (Mouse-ear cress).